We begin with the raw amino-acid sequence, 421 residues long: 3-isopropylmalate dehydratase large subunit (421 aa).

[4Fe-4S] cluster contacts are provided by C300, C360, and C363.

Belongs to the aconitase/IPM isomerase family. LeuC type 2 subfamily. As to quaternary structure, heterodimer of LeuC and LeuD. [4Fe-4S] cluster serves as cofactor.

It carries out the reaction (2R,3S)-3-isopropylmalate = (2S)-2-isopropylmalate. Its pathway is amino-acid biosynthesis; L-leucine biosynthesis; L-leucine from 3-methyl-2-oxobutanoate: step 2/4. Catalyzes the isomerization between 2-isopropylmalate and 3-isopropylmalate, via the formation of 2-isopropylmaleate. The sequence is that of 3-isopropylmalate dehydratase large subunit from Lachnoclostridium phytofermentans (strain ATCC 700394 / DSM 18823 / ISDg) (Clostridium phytofermentans).